Reading from the N-terminus, the 246-residue chain is Transcription factor A, mitochondrial (246 aa).

Residues 1 to 42 constitute a mitochondrion transit peptide; that stretch reads MALLRGVWGVLSALGKSGADLCAVCGSRLRSPFSFAYVPRWF. Positions 50–118 form a DNA-binding region, HMG box 1; the sequence is PKKPMTSYVR…VYKEEVNRIQ (69 aa). 2 positions are modified to phosphoserine; by PKA: S56 and S61. Position 122 is a phosphothreonine (T122). The HMG box 2 DNA-binding region spans 155 to 219; that stretch reads PKRPRSAYNI…RYYNEMKSWE (65 aa). S160 is modified (phosphoserine; by PKA). Residues S193 and S195 each carry the phosphoserine modification.

As to quaternary structure, monomer; binds DNA as a monomer. Homodimer. Component of the mitochondrial transcription initiation complex, composed at least of TFB2M, TFAM and POLRMT. In this complex TFAM recruits POLRMT to the promoter whereas TFB2M induces structural changes in POLRMT to enable promoter opening and trapping of the DNA non-template strand. Upon metabolic stress, forms a complex composed of FOXO3, SIRT3, TFAM and POLRMT. Interacts with TFB1M and TFB2M. Interacts with CLPX; this enhances DNA-binding. Post-translationally, phosphorylation by PKA within the HMG box 1 impairs DNA binding and promotes degradation by the AAA+ Lon protease.

The protein resides in the mitochondrion. Its subcellular location is the mitochondrion matrix. It is found in the mitochondrion nucleoid. Its function is as follows. Binds to the mitochondrial light strand promoter and functions in mitochondrial transcription regulation. Component of the mitochondrial transcription initiation complex, composed at least of TFB2M, TFAM and POLRMT that is required for basal transcription of mitochondrial DNA. In this complex, TFAM recruits POLRMT to a specific promoter whereas TFB2M induces structural changes in POLRMT to enable promoter opening and trapping of the DNA non-template strand. Required for accurate and efficient promoter recognition by the mitochondrial RNA polymerase. Promotes transcription initiation from the HSP1 and the light strand promoter by binding immediately upstream of transcriptional start sites. Is able to unwind DNA. Bends the mitochondrial light strand promoter DNA into a U-turn shape via its HMG boxes. Required for maintenance of normal levels of mitochondrial DNA. May play a role in organizing and compacting mitochondrial DNA. This is Transcription factor A, mitochondrial from Sus scrofa (Pig).